Reading from the N-terminus, the 245-residue chain is NAD(P)H-quinone oxidoreductase subunit K (245 aa).

C58, C59, C123, and C154 together coordinate [4Fe-4S] cluster.

This sequence belongs to the complex I 20 kDa subunit family. As to quaternary structure, NDH-1 can be composed of about 15 different subunits; different subcomplexes with different compositions have been identified which probably have different functions. It depends on [4Fe-4S] cluster as a cofactor.

The protein resides in the cellular thylakoid membrane. It catalyses the reaction a plastoquinone + NADH + (n+1) H(+)(in) = a plastoquinol + NAD(+) + n H(+)(out). It carries out the reaction a plastoquinone + NADPH + (n+1) H(+)(in) = a plastoquinol + NADP(+) + n H(+)(out). In terms of biological role, NDH-1 shuttles electrons from an unknown electron donor, via FMN and iron-sulfur (Fe-S) centers, to quinones in the respiratory and/or the photosynthetic chain. The immediate electron acceptor for the enzyme in this species is believed to be plastoquinone. Couples the redox reaction to proton translocation, and thus conserves the redox energy in a proton gradient. Cyanobacterial NDH-1 also plays a role in inorganic carbon-concentration. This Nostoc sp. (strain PCC 7120 / SAG 25.82 / UTEX 2576) protein is NAD(P)H-quinone oxidoreductase subunit K.